Here is a 970-residue protein sequence, read N- to C-terminus: Phosphoenolpyruvate carboxylase 1 (970 aa).

Position 15 is a phosphoserine (S15). Residues H177, K606, and R647 contribute to the active site.

The protein belongs to the PEPCase type 1 family. Homotetramer. Requires Mg(2+) as cofactor.

It is found in the cytoplasm. It catalyses the reaction oxaloacetate + phosphate = phosphoenolpyruvate + hydrogencarbonate. It functions in the pathway photosynthesis; C4 acid pathway. Its activity is regulated as follows. By light-reversible phosphorylation. Functionally, through the carboxylation of phosphoenolpyruvate (PEP) it forms oxaloacetate, a four-carbon dicarboxylic acid source for the tricarboxylic acid cycle. The chain is Phosphoenolpyruvate carboxylase 1 (PEP1) from Zea mays (Maize).